Reading from the N-terminus, the 238-residue chain is Tetraspanin-4 (238 aa).

The Cytoplasmic segment spans residues 1 to 13 (MARGCLQGVKYLM). Residues 14-34 (FAFNLLFWLGGCGVLGVGIWL) traverse the membrane as a helical segment. Topologically, residues 35-55 (AATQGNFATLSSSFPSLSAAN) are extracellular. A helical transmembrane segment spans residues 56–76 (LLIVTGTFVMAIGFVGCIGAL). Residues 77–85 (KENKCLLLT) lie on the Cytoplasmic side of the membrane. The helical transmembrane segment at 86–106 (FFVLLLLVFLLEATIAVLFFA) threads the bilayer. Topologically, residues 107-201 (YSDKIDSYAQ…ETVKAWLQEN (95 aa)) are extracellular. N-linked (GlcNAc...) asparagine glycosylation is found at N152 and N161. A helical membrane pass occupies residues 202-222 (LLAVGIFGLCTALVQILGLTF). Residues 223–238 (AMTMYCQVVKADTYCA) are Cytoplasmic-facing.

Belongs to the tetraspanin (TM4SF) family. In terms of assembly, forms a complex with integrins.

The protein resides in the membrane. This is Tetraspanin-4 (Tspan4) from Mus musculus (Mouse).